The chain runs to 733 residues: Zinc finger protein indra (733 aa).

The ZAD domain occupies 17–91 (VRCDHCGTSQ…RETVDRVQEQ (75 aa)). Zn(2+) is bound by residues C19, C22, C64, and C67. Basic and acidic residues predominate over residues 90–100 (EQPAKKTKVAE). Residues 90 to 121 (EQPAKKTKVAEIEEPSTQESDKKAVKVPKKNT) are disordered. Phosphoserine occurs at positions 109, 153, and 176. A phosphothreonine mark is found at T180 and T188. C2H2-type zinc fingers lie at residues 228–251 (FQCP…QKEH) and 259–282 (YPCT…RDTH). Residues 285-316 (TFESEAKTKAKESKEKEAKSGAKNKIDAKAKE) show a composition bias toward basic and acidic residues. The tract at residues 285-336 (TFESEAKTKAKESKEKEAKSGAKNKIDAKAKETNAVSQRKKPKEKKSKEKKT) is disordered. 2 consecutive C2H2-type zinc fingers follow at residues 416–439 (FQCE…KTVH) and 447–469 (FKCH…MTLH). Disordered regions lie at residues 499–525 (IENT…FTNR) and 540–622 (AFKT…SSDV). Residues 592-602 (SVSTTNGNSPA) are compositionally biased toward polar residues. Phosphoserine is present on residues S600, S642, and S646. The residue at position 647 (T647) is a Phosphothreonine. 2 C2H2-type zinc fingers span residues 653–676 (LSCD…EKKH) and 708–733 (LPCG…RKRH). The residue at position 654 (S654) is a Phosphoserine.

This sequence belongs to the krueppel C2H2-type zinc-finger protein family.

It is found in the nucleus. The protein localises to the nucleolus. Functionally, required for rDNA copy number maintenance and non-random sister chromatid segregation (NRSS) following unequal sister chromatid exchange. Binds ribosomal DNA (rDNA) preferentially binding to intergenic spacers (IGS) regions on both X and Y chromosomes. Essential for NRSS, a mechanism which contributes to the recovery and maintenance of inherently unstable rDNA copy numbers so that the integrity of the germline genome is upheld over generations and germline immortality is sustained. May be involved in transcriptional regulation. The chain is Zinc finger protein indra from Drosophila melanogaster (Fruit fly).